A 253-amino-acid chain; its full sequence is UPF0280 protein Mbar_A3697 (253 aa).

This sequence belongs to the UPF0280 family.

This is UPF0280 protein Mbar_A3697 from Methanosarcina barkeri (strain Fusaro / DSM 804).